The primary structure comprises 341 residues: Protein-glutamate methylesterase/protein-glutamine glutaminase 2 (341 aa).

The Response regulatory domain maps to lysine 7–glutamate 120. Aspartate 58 carries the post-translational modification 4-aspartylphosphate. In terms of domain architecture, CheB-type methylesterase spans valine 155–leucine 341. Catalysis depends on residues serine 161, histidine 187, and aspartate 283.

Belongs to the CheB family. In terms of processing, phosphorylated by CheA. Phosphorylation of the N-terminal regulatory domain activates the methylesterase activity.

The protein localises to the cytoplasm. It carries out the reaction [protein]-L-glutamate 5-O-methyl ester + H2O = L-glutamyl-[protein] + methanol + H(+). The enzyme catalyses L-glutaminyl-[protein] + H2O = L-glutamyl-[protein] + NH4(+). Functionally, involved in chemotaxis. Part of a chemotaxis signal transduction system that modulates chemotaxis in response to various stimuli. Catalyzes the demethylation of specific methylglutamate residues introduced into the chemoreceptors (methyl-accepting chemotaxis proteins or MCP) by CheR. Also mediates the irreversible deamidation of specific glutamine residues to glutamic acid. The polypeptide is Protein-glutamate methylesterase/protein-glutamine glutaminase 2 (Syntrophomonas wolfei subsp. wolfei (strain DSM 2245B / Goettingen)).